The chain runs to 318 residues: NADH-ubiquinone oxidoreductase chain 1 (318 aa).

8 helical membrane-spanning segments follow: residues 3-23 (TMNL…LTLV), 69-89 (ILYI…WTPL), 98-118 (FNLG…SILW), 135-155 (AVAQ…SILL), 171-191 (HLWL…STLA), 217-237 (AGPF…MNAL), 253-273 (ELFT…FLWI), and 294-314 (LPLT…ISSI).

Belongs to the complex I subunit 1 family. As to quaternary structure, core subunit of respiratory chain NADH dehydrogenase (Complex I) which is composed of 45 different subunits.

Its subcellular location is the mitochondrion inner membrane. The catalysed reaction is a ubiquinone + NADH + 5 H(+)(in) = a ubiquinol + NAD(+) + 4 H(+)(out). Functionally, core subunit of the mitochondrial membrane respiratory chain NADH dehydrogenase (Complex I) which catalyzes electron transfer from NADH through the respiratory chain, using ubiquinone as an electron acceptor. Essential for the catalytic activity and assembly of complex I. The polypeptide is NADH-ubiquinone oxidoreductase chain 1 (MT-ND1) (Papio hamadryas (Hamadryas baboon)).